The primary structure comprises 96 residues: Neutrophil defensin 8 (96 aa).

The signal sequence occupies residues 1–19 (MRTLVILAAILLVALQAQA). The propeptide occupies 20–66 (EPLQARTDEATAAQEQIPTDNPEVVVSLAWDESLAPKDSVPGLRKNM). Cystine bridges form between cysteine 68/cysteine 96, cysteine 70/cysteine 85, and cysteine 75/cysteine 95.

Belongs to the alpha-defensin family.

The protein resides in the secreted. Probable antibiotic and antifungal activity. In Macaca mulatta (Rhesus macaque), this protein is Neutrophil defensin 8.